Here is a 538-residue protein sequence, read N- to C-terminus: Syncytin-1 (538 aa).

Residues 1 to 20 (MALPYHILLFTVLLPSFTLT) form the signal peptide. The Extracellular portion of the chain corresponds to 21–443 (APPPCRCMTS…NTGPWGLLSQ (423 aa)). N-linked (GlcNAc...) asparagine glycosylation is present at N169. Positions 186–189 (CWIC) match the CXXC motif. 3 disulfide bridges follow: C186–C189, C186–C405, and C397–C404. 4 N-linked (GlcNAc...) asparagine glycosylation sites follow: N208, N214, N234, and N281. Residues 320-340 (ILPFVIGAGVLGALGTGIGGI) are fusion peptide. Residues 380-396 (LQNRRALDLLTAERGGT) form an immunosuppression region. The CX6CC signature appears at 397 to 405 (CLFLGEECC). N409 is a glycosylation site (N-linked (GlcNAc...) asparagine). The chain crosses the membrane as a helical span at residues 444–464 (WMPWILPFLGPLAAIILLLLF). The segment at 465–484 (GPCIFNLLVNFVSSRIEAVK) is essential for the fusiogenic function. The Cytoplasmic segment spans residues 465-538 (GPCIFNLLVN…LLRPNSAGSS (74 aa)). The disordered stretch occupies residues 496-538 (KIYRRPLDRPASPRSDVNDIKCTPPEEISTAQPLLRPNSAGSS).

It belongs to the gamma type-C retroviral envelope protein family. HERV class-I W env subfamily. In terms of assembly, the mature envelope protein (Env) consists of a trimer of SU-TM heterodimers attached probably by a labile interchain disulfide bond. Interacts with the C-type lectin CD209/DC-SIGN. Post-translationally, specific enzymatic cleavages in vivo yield mature proteins. Envelope glycoproteins are synthesized as an inactive precursor that is heavily N-glycosylated and processed likely by furin in the Golgi to yield the mature SU and TM proteins. The cleavage site between SU and TM requires the minimal sequence [KR]-X-[KR]-R. The CXXC motif is highly conserved across a broad range of retroviral envelope proteins. It is thought to participate in the formation of a labile disulfide bond possibly with the CX6CC motif present in the transmembrane protein.

Its subcellular location is the cell membrane. The protein localises to the virion. In terms of biological role, this endogenous retroviral envelope protein has retained its original fusogenic properties and participates in trophoblast fusion and the formation of a syncytium during placenta morphogenesis. May recognize and induce fusion through binding of SLC1A4 and SLC1A5. Endogenous envelope proteins may have kept, lost or modified their original function during evolution. Retroviral envelope proteins mediate receptor recognition and membrane fusion during early infection. The surface protein (SU) mediates receptor recognition, while the transmembrane protein (TM) acts as a class I viral fusion protein. The protein may have at least 3 conformational states: pre-fusion native state, pre-hairpin intermediate state, and post-fusion hairpin state. During viral and target cell membrane fusion, the coiled coil regions (heptad repeats) assume a trimer-of-hairpins structure, positioning the fusion peptide in close proximity to the C-terminal region of the ectodomain. The formation of this structure appears to drive apposition and subsequent fusion of membranes. This Gorilla gorilla gorilla (Western lowland gorilla) protein is Syncytin-1 (ERVW-1).